The primary structure comprises 1240 residues: Ubiquitin carboxyl-terminal hydrolase 36 (1240 aa).

2 disordered regions span residues 37–56 and 100–144; these read AKTS…STDN and SNGG…GTSA. 2 stretches are compositionally biased toward low complexity: residues 47–56 and 101–132; these read SSTSGSSTDN and NGGA…DNNG. Positions 202–512 constitute a USP domain; that stretch reads TGMLNVGNTC…NAYIMFYELD (311 aa). Cysteine 211 functions as the Nucleophile in the catalytic mechanism. The Proton acceptor role is filled by histidine 471. The segment at 637–705 is disordered; that stretch reads ANKSSCNTLN…KMFEESSESV (69 aa). The segment covering 639–649 has biased composition (polar residues); that stretch reads KSSCNTLNNSK. Over residues 650–662 the composition is skewed to low complexity; that stretch reads QHQPQQQQQQPQH. The span at 668-680 shows a compositional bias: acidic residues; it reads SDEEEDSDDDNDN. Threonine 715 is subject to Phosphothreonine. 4 disordered regions span residues 723–818, 831–998, 1076–1163, and 1198–1240; these read YESA…KQKT, YKNK…GESL, DMSS…EYES, and RFAG…QQQS. Serine 725 and serine 727 each carry phosphoserine. The span at 733–744 shows a compositional bias: low complexity; sequence QQQQQQQTLQQQ. Acidic residues predominate over residues 759–769; it reads SDTDDDDDEEQ. Residues 794–815 are compositionally biased toward low complexity; it reads NSSSSKTKSASNASSANVNSSK. The segment covering 843-859 has biased composition (acidic residues); sequence DDDDDDDEDEDEDEDEA. The span at 869–879 shows a compositional bias: low complexity; sequence TKSSSSSSSTS. The segment covering 880–890 has biased composition (polar residues); that stretch reads LTNGWQQSQNG. The residue at position 895 (serine 895) is a Phosphoserine. Residue threonine 898 is modified to Phosphothreonine. At serine 901 the chain carries Phosphoserine. Residues 918–941 are compositionally biased toward acidic residues; the sequence is DEDDDENVDGVADADDDDDNDEVA. Residues 976-988 show a composition bias toward polar residues; the sequence is LNGSSKSQQTTPR. Over residues 1076–1103 the composition is skewed to low complexity; the sequence is DMSSSSSSSSSTNSSSNSSSRSNGNSSN. The span at 1111 to 1120 shows a compositional bias: basic and acidic residues; the sequence is AEAREQRKRD. Over residues 1231–1240 the composition is skewed to low complexity; it reads QSSGQQQQQS.

The protein belongs to the peptidase C19 family. Interacts with atms/PAF1, but not with CycT.

The protein localises to the nucleus. Its subcellular location is the nucleolus. The catalysed reaction is Thiol-dependent hydrolysis of ester, thioester, amide, peptide and isopeptide bonds formed by the C-terminal Gly of ubiquitin (a 76-residue protein attached to proteins as an intracellular targeting signal).. In terms of biological role, required for maintaining multiple types of adult stem cells, including male and female germline, epithelial follicle cell and intestinal stem cells. May function as a transcriptional repressor by continually deubiquiting histone H2B at the promoters of genes critical for cellular differentiation, thereby preventing histone H3 'Lys-4' trimethylation (H3K4). Controls selective autophagy activation by ubiquitinated proteins. This Drosophila grimshawi (Hawaiian fruit fly) protein is Ubiquitin carboxyl-terminal hydrolase 36 (Usp36).